Consider the following 322-residue polypeptide: HPr kinase/phosphorylase (322 aa).

Residues histidine 146 and lysine 167 contribute to the active site. An ATP-binding site is contributed by 161–168 (GDSGLGKS). Position 168 (serine 168) interacts with Mg(2+). Residue aspartate 185 is the Proton acceptor; for phosphorylation activity. Proton donor; for dephosphorylation activity of the active site. The interval 209-218 (LEVRGLGLLD) is important for the catalytic mechanism of both phosphorylation and dephosphorylation. Glutamate 210 contributes to the Mg(2+) binding site. Residue arginine 250 is part of the active site. Positions 271-276 (QVAAGR) are important for the catalytic mechanism of dephosphorylation.

The protein belongs to the HPrK/P family. In terms of assembly, homohexamer. Mg(2+) serves as cofactor.

It catalyses the reaction [HPr protein]-L-serine + ATP = [HPr protein]-O-phospho-L-serine + ADP + H(+). The enzyme catalyses [HPr protein]-O-phospho-L-serine + phosphate + H(+) = [HPr protein]-L-serine + diphosphate. In terms of biological role, catalyzes the ATP- as well as the pyrophosphate-dependent phosphorylation of a specific serine residue in HPr, a phosphocarrier protein of the phosphoenolpyruvate-dependent sugar phosphotransferase system (PTS). HprK/P also catalyzes the pyrophosphate-producing, inorganic phosphate-dependent dephosphorylation (phosphorolysis) of seryl-phosphorylated HPr (P-Ser-HPr). This is HPr kinase/phosphorylase from Burkholderia lata (strain ATCC 17760 / DSM 23089 / LMG 22485 / NCIMB 9086 / R18194 / 383).